Consider the following 242-residue polypeptide: Orotidine 5'-phosphate decarboxylase (242 aa).

Substrate-binding positions include Asp22, Lys44, 71 to 80, Thr130, Arg190, Gln199, Gly219, and Arg220; that span reads DLKYHDIPNT. Lys73 acts as the Proton donor in catalysis.

Belongs to the OMP decarboxylase family. Type 1 subfamily. In terms of assembly, homodimer.

The catalysed reaction is orotidine 5'-phosphate + H(+) = UMP + CO2. It functions in the pathway pyrimidine metabolism; UMP biosynthesis via de novo pathway; UMP from orotate: step 2/2. Its function is as follows. Catalyzes the decarboxylation of orotidine 5'-monophosphate (OMP) to uridine 5'-monophosphate (UMP). The protein is Orotidine 5'-phosphate decarboxylase of Laribacter hongkongensis (strain HLHK9).